The following is a 278-amino-acid chain: Truncated FRIGIDA-like protein 1 (278 aa).

The stretch at Met1 to Ser36 forms a coiled coil.

The protein belongs to the Frigida family.

In terms of biological role, truncated inactive FRIGIDA-like 1 protein. The polypeptide is Truncated FRIGIDA-like protein 1 (FRL1) (Arabidopsis thaliana (Mouse-ear cress)).